We begin with the raw amino-acid sequence, 450 residues long: Phosphoglucosamine mutase 2 (450 aa).

The Phosphoserine intermediate role is filled by S101. Mg(2+)-binding residues include S101, D245, D247, and D249. At S101 the chain carries Phosphoserine.

The protein belongs to the phosphohexose mutase family. Requires Mg(2+) as cofactor. Activated by phosphorylation.

It catalyses the reaction alpha-D-glucosamine 1-phosphate = D-glucosamine 6-phosphate. Catalyzes the conversion of glucosamine-6-phosphate to glucosamine-1-phosphate. The polypeptide is Phosphoglucosamine mutase 2 (Shewanella frigidimarina (strain NCIMB 400)).